A 96-amino-acid polypeptide reads, in one-letter code: Large ribosomal subunit protein bL27 (96 aa).

Residues 1–9 (MLRLDLQFF) constitute a propeptide that is removed on maturation.

The protein belongs to the bacterial ribosomal protein bL27 family. In terms of processing, the N-terminus is cleaved by ribosomal processing cysteine protease Prp.

The chain is Large ribosomal subunit protein bL27 from Geobacillus sp. (strain WCH70).